A 145-amino-acid polypeptide reads, in one-letter code: 3-hydroxyacyl-[acyl-carrier-protein] dehydratase FabZ (145 aa).

His48 is a catalytic residue.

This sequence belongs to the thioester dehydratase family. FabZ subfamily.

It is found in the cytoplasm. The catalysed reaction is a (3R)-hydroxyacyl-[ACP] = a (2E)-enoyl-[ACP] + H2O. Involved in unsaturated fatty acids biosynthesis. Catalyzes the dehydration of short chain beta-hydroxyacyl-ACPs and long chain saturated and unsaturated beta-hydroxyacyl-ACPs. The sequence is that of 3-hydroxyacyl-[acyl-carrier-protein] dehydratase FabZ from Saccharophagus degradans (strain 2-40 / ATCC 43961 / DSM 17024).